Reading from the N-terminus, the 164-residue chain is NADH-quinone oxidoreductase subunit I 1 (164 aa).

2 4Fe-4S ferredoxin-type domains span residues 54-84 (LRRY…IEAG) and 95-124 (VRYD…EGPN). Residues Cys64, Cys67, Cys70, Cys74, Cys104, Cys107, Cys110, and Cys114 each contribute to the [4Fe-4S] cluster site.

The protein belongs to the complex I 23 kDa subunit family. NDH-1 is composed of 14 different subunits. Subunits NuoA, H, J, K, L, M, N constitute the membrane sector of the complex. [4Fe-4S] cluster is required as a cofactor.

It is found in the cell inner membrane. The catalysed reaction is a quinone + NADH + 5 H(+)(in) = a quinol + NAD(+) + 4 H(+)(out). In terms of biological role, NDH-1 shuttles electrons from NADH, via FMN and iron-sulfur (Fe-S) centers, to quinones in the respiratory chain. The immediate electron acceptor for the enzyme in this species is believed to be ubiquinone. Couples the redox reaction to proton translocation (for every two electrons transferred, four hydrogen ions are translocated across the cytoplasmic membrane), and thus conserves the redox energy in a proton gradient. The protein is NADH-quinone oxidoreductase subunit I 1 of Rhizobium meliloti (strain 1021) (Ensifer meliloti).